Reading from the N-terminus, the 277-residue chain is Nickel transport system permease protein NikC (277 aa).

Topologically, residues 1-12 (MNFFLSSRWSVR) are cytoplasmic. The chain crosses the membrane as a helical span at residues 13–33 (LALIIIALLALIALTSQWWLP). At 34-78 (YDPQAIDLPSRLLSPDAQHWLGTDHLGRDIFSRLMAATRVSLGSV) the chain is on the periplasmic side. The 194-residue stretch at 67–260 (LMAATRVSLG…ISVMAFNLVG (194 aa)) folds into the ABC transmembrane type-1 domain. A helical membrane pass occupies residues 79 to 99 (MACLLLVLTLGLVIGGSAGLI). The Cytoplasmic portion of the chain corresponds to 100-120 (GGRVDQATMRVADMFMTFPTS). The chain crosses the membrane as a helical span at residues 121–141 (ILSFFMVGVLGTGLTNVIIAI). At 142–183 (ALSHWAWYARMVRSLVISLRQREFVLASRLSGAGHVRVFVDH) the chain is on the periplasmic side. Residues 184–204 (LAGAVIPSLLVLATLDIGHMM) form a helical membrane-spanning segment. At 205-207 (LHV) the chain is on the cytoplasmic side. Residues 208-228 (AGMSFLGLGVTAPTAEWGVMI) traverse the membrane as a helical segment. Over 229–239 (NDARQYIWTQP) the chain is Periplasmic. Residues 240-260 (LQMFWPGLALFISVMAFNLVG) form a helical membrane-spanning segment. Residues 261-277 (DALRDHLDPHLVTEHAH) lie on the Cytoplasmic side of the membrane.

This sequence belongs to the binding-protein-dependent transport system permease family. OppBC subfamily. In terms of assembly, probably forms a heterodimeric pore with NikB.

It is found in the cell inner membrane. Functionally, involved in a nickel transport system, probably translocates nickel through the bacterial inner membrane. The sequence is that of Nickel transport system permease protein NikC (nikC) from Escherichia coli O157:H7.